The following is a 75-amino-acid chain: Translational regulator CsrA (75 aa).

Belongs to the CsrA/RsmA family. As to quaternary structure, homodimer; the beta-strands of each monomer intercalate to form a hydrophobic core, while the alpha-helices form wings that extend away from the core.

The protein resides in the cytoplasm. Its function is as follows. A translational regulator that binds mRNA to regulate translation initiation and/or mRNA stability. Usually binds in the 5'-UTR at or near the Shine-Dalgarno sequence preventing ribosome-binding, thus repressing translation. Its main target seems to be the major flagellin gene, while its function is anatagonized by FliW. This is Translational regulator CsrA from Acetivibrio thermocellus (strain ATCC 27405 / DSM 1237 / JCM 9322 / NBRC 103400 / NCIMB 10682 / NRRL B-4536 / VPI 7372) (Clostridium thermocellum).